Here is a 256-residue protein sequence, read N- to C-terminus: Small ribosomal subunit protein uS3 (256 aa).

Residues 39-111 (IREFLNENFS…EVILNIIEVR (73 aa)) form the KH type-2 domain. The interval 219 to 256 (DTRKPFEAGNQKRGQKRRPRNDQPGQRPQQRNRNSKED) is disordered. The segment covering 240–250 (DQPGQRPQQRN) has biased composition (low complexity).

The protein belongs to the universal ribosomal protein uS3 family. In terms of assembly, part of the 30S ribosomal subunit. Forms a tight complex with proteins S10 and S14.

Functionally, binds the lower part of the 30S subunit head. Binds mRNA in the 70S ribosome, positioning it for translation. The chain is Small ribosomal subunit protein uS3 from Acholeplasma laidlawii (strain PG-8A).